The primary structure comprises 533 residues: Cytochrome P450 monooxygenase ltmK (533 aa).

Residues 27 to 47 (VHWLQVIVALLVLIVCIFLYW) traverse the membrane as a helical segment. The N-linked (GlcNAc...) asparagine glycan is linked to N116. Residue C473 participates in heme binding. A glycan (N-linked (GlcNAc...) asparagine) is linked at N528.

It belongs to the cytochrome P450 family. Heme is required as a cofactor.

The protein resides in the membrane. It functions in the pathway secondary metabolite biosynthesis. Functionally, cytochrome P450 monooxygenase; part of the gene clusters that mediates the biosynthesis of lolitrems, indole-diterpene mycotoxins that are potent tremorgens in mammals, and are synthesized by clavicipitaceous fungal endophytes in association with their grass hosts. The geranylgeranyl diphosphate (GGPP) synthase ltmG is proposed to catalyze the first step in lolitrem biosynthesis. LtmG catalyzes a series of iterative condensations of isopentenyl diphosphate (IPP) with dimethylallyl diphosphate (DMAPP), geranyl diphosphate (GPP), and farnesyl diphosphate (FPP), to form GGPP. GGPP then condenses with indole-3-glycerol phosphate to form 3-geranylgeranylindole, an acyclic intermediate, to be incorporated into paxilline. Either ltmG or ltmC could be responsible for this step, as both are putative prenyl transferases. The FAD-dependent monooxygenase ltmM then catalyzes the epoxidation of the two terminal alkenes of the geranylgeranyl moiety, which is subsequently cyclized by ltmB, to paspaline. The cytochrome P450 monooxygenases ltmQ and ltmP can sequentially oxidize paspaline to terpendole E and terpendole F. Alternatively, ltmP converts paspaline to an intermediate which is oxidized by ltmQ to terpendole F. LtmF, ltmK, ltmE and ltmJ appear to be unique to the epichloe endophytes. The prenyltransferase ltmF is involved in the 27-hydroxyl-O-prenylation. The cytochrome P450 monooxygenase ltmK is required for the oxidative acetal ring formation. The multi-functional prenyltransferase ltmE is required for C20- and C21-prenylations of the indole ring of paspalanes and acts together with the cytochrome P450 monooxygenase ltmJ to yield lolitremanes by multiple oxidations and ring closures. The stereoisomer pairs of lolitriol and lolitrem N or lolitrem B and lolitrem F may be attributed to variations in the way in which ring closure can occur under the action of ltmJ. While the major product of this pathway is lolitrem B, the prenyl transferases and cytochrome P450 monooxygenases identified in this pathway have a remarkable versatility in their regio- and stereo-specificities to generate a diverse range of metabolites that are products of a metabolic grid rather than a linear pathway. This is Cytochrome P450 monooxygenase ltmK from Epichloe festucae var. lolii (Neotyphodium lolii).